Consider the following 84-residue polypeptide: Small ribosomal subunit protein bS20 (84 aa).

Residues 1–25 (MANIVSNEKTYRHTQKVRKENHAKM) are disordered.

Belongs to the bacterial ribosomal protein bS20 family.

Functionally, binds directly to 16S ribosomal RNA. The polypeptide is Small ribosomal subunit protein bS20 (Ureaplasma urealyticum serovar 10 (strain ATCC 33699 / Western)).